Here is a 418-residue protein sequence, read N- to C-terminus: Tyrosine--tRNA ligase (418 aa).

An L-tyrosine-binding site is contributed by Tyr-34. The short motif at 39-48 (PTADSLHLGH) is the 'HIGH' region element. Residues Tyr-169 and Gln-173 each coordinate L-tyrosine. The short motif at 229–233 (KFGKS) is the 'KMSKS' region element. Lys-232 serves as a coordination point for ATP. One can recognise an S4 RNA-binding domain in the interval 352-418 (NNIVELLVSS…GKKKYFVLTY (67 aa)).

This sequence belongs to the class-I aminoacyl-tRNA synthetase family. TyrS type 1 subfamily. As to quaternary structure, homodimer.

The protein resides in the cytoplasm. It carries out the reaction tRNA(Tyr) + L-tyrosine + ATP = L-tyrosyl-tRNA(Tyr) + AMP + diphosphate + H(+). Its function is as follows. Catalyzes the attachment of tyrosine to tRNA(Tyr) in a two-step reaction: tyrosine is first activated by ATP to form Tyr-AMP and then transferred to the acceptor end of tRNA(Tyr). This Streptococcus pneumoniae serotype 19F (strain G54) protein is Tyrosine--tRNA ligase.